Reading from the N-terminus, the 1272-residue chain is Myosin-3 (1272 aa).

A disordered region spans residues 1 to 20 (MAVIKKGARRKDVKEPKKRS). The Myosin motor domain occupies 36-715 (VGISDLTLLS…SLFALEDMRD (680 aa)). 129 to 136 (GESGAGKT) lines the ATP pocket. Phosphoserine is present on serine 357. Positions 588-610 (ANELVETLSKAEPSYIRTIKPNQ) are actin-binding. 2 IQ domains span residues 719–739 (YNMAARIQRAWRRFLQRRIDA) and 740–765 (AIKIQRTIREKKGGNKYVKLRDYGTK). A TH1 domain is found at 771 to 961 (KERRSMSLLG…TIYVRRGHPA (191 aa)). Disordered stretches follow at residues 951 to 1015 (STIY…QKPV), 1029 to 1141 (YNPK…SELP), and 1217 to 1272 (VQFG…DDDW). Residues 980–1000 (IKSKKSKHKSTHKHTHSHRSH) are compositionally biased toward basic residues. Low complexity predominate over residues 1066–1078 (KKASSSHKSSSAK). Over residues 1089-1098 (GVEKNKEPLK) the composition is skewed to basic and acidic residues. Pro residues predominate over residues 1109–1118 (PIPPPPPPMG). One can recognise an SH3 domain in the interval 1120 to 1182 (PKDPKFEAAY…PTAYMTPYKD (63 aa)). The segment covering 1217–1236 (VQFGSATVGPTSDNQSNPVG) has biased composition (polar residues). Acidic residues predominate over residues 1258–1272 (ADDDDNDDGDDDDDW).

This sequence belongs to the TRAFAC class myosin-kinesin ATPase superfamily. Myosin family. Interacts (via myosin motor domain) with SHE4; this interaction is important for proper localization and may regulate the interaction of the motor domain with actin. Interacts (via SH3 domain) with VRP1; this interaction is required for localization to sites of polarized growth and may regulate the interaction of the tail domain with actin. Interacts (via SH3 domain) with PAN1; this interaction is important for late stages of endocytopsis. Interacts (via SH3 domain) with BBC1 and LAS17. Interacts (via C-terminal acidic tail) with ARC19 and ARC40; ARC19 and ARC40 are Arp2/3 complex subunits. In terms of processing, phosphorylation of the TEDS site (Ser-357) is required for the polarization of the actin cytoskeleton and for ligand-induced, but not for constitutive internalization of STE2. Phosphorylation probably activates the myosin-I ATPase. Ser-357 is phosphorylated by CLA4 and STE20 in vitro.

The protein resides in the cytoplasm. It is found in the cytoskeleton. It localises to the actin patch. One of two redundant type-I myosins implicated in the organization of the actin cytoskeleton. Required for proper actin cytoskeleton polarization and for the internalization step in endocytosis. At the cell cortex, assembles in patch-like structures together with proteins from the actin-polymerizing machinery and promotes actin assembly. Functions redundantly with LAS17 as actin nucleation-promoting factor (NPF) for the Arp2/3 complex. Motor domain phosphorylation by PAK kinases CLA4 and STE20 promotes CDC42-regulated actin assembly. Functions together with the NPF PAN1 in late stages of endocytosis. Motor domain phosphorylation by PDK1 kinases PKH1 and PKH2, and by SGK kinases YPK1 and YPK2, promotes ligand-induced, but not constitutive endocytosis of the G protein-coupled receptor STE2. The polypeptide is Myosin-3 (MYO3) (Saccharomyces cerevisiae (strain ATCC 204508 / S288c) (Baker's yeast)).